Consider the following 2263-residue polypeptide: Collagen alpha-6(VI) chain (2263 aa).

An N-terminal signal peptide occupies residues 1-19 (MMLLILFLVIICSHISVNQ). The nonhelical region stretch occupies residues 20-1391 (DSGPEYADVV…TCCCLFCKCI (1372 aa)). 5 consecutive VWFA domains span residues 27–206 (DVVF…IKDV), 229–411 (DVVF…RNQI), 436–606 (DIYL…RNQV), 622–791 (DIMF…EDDL), and 809–982 (DVVF…FSDV). Asn198, Asn275, Asn288, Asn347, and Asn520 each carry an N-linked (GlcNAc...) asparagine glycan. N-linked (GlcNAc...) asparagine glycans are attached at residues Asn930 and Asn988. 2 VWFA domains span residues 1000–1171 (DLVF…NKRI) and 1187–1371 (DVVV…GSRL). Asn1290 carries an N-linked (GlcNAc...) asparagine glycan. The segment at 1392–1725 (GGDGTMGDPG…GRKGVKGAKG (334 aa)) is triple-helical region. The disordered stretch occupies residues 1397–1723 (MGDPGPPGKR…PPGRKGVKGA (327 aa)). Over residues 1498-1508 (TPGDRGAKGLR) the composition is skewed to basic and acidic residues. A Cell attachment site motif is present at residues 1508–1510 (RGD). Residues 1547–1559 (SRRKTAAHGRRGH) are compositionally biased toward basic residues. Gly residues predominate over residues 1680–1689 (GDPGGPGETG). The interval 1726–2263 (LASFSTCELI…MIESAPKQHD (538 aa)) is nonhelical region. VWFA domains are found at residues 1757 to 1937 (ELVF…ERLQ) and 1965 to 2166 (DAAF…INSI).

The protein belongs to the type VI collagen family. In terms of assembly, trimers composed of three different chains: alpha-1(VI), alpha-2(VI), and alpha-3(VI) or alpha-5(VI) or alpha-6(VI). Post-translationally, prolines at the third position of the tripeptide repeating unit (G-X-Y) are hydroxylated in some or all of the chains.

It is found in the secreted. Its subcellular location is the extracellular space. It localises to the extracellular matrix. In terms of biological role, collagen VI acts as a cell-binding protein. The protein is Collagen alpha-6(VI) chain (COL6A6) of Homo sapiens (Human).